The sequence spans 384 residues: Na(+)/H(+) antiporter NhaA (384 aa).

11 consecutive transmembrane segments (helical) span residues 9–29 (NLETIGGILLFIAAVLAIIIA), 58–78 (LLLWINDGLMAIYFLLIGLEI), 94–114 (LVPALTALAGLLFPALIFIFF), 124–144 (GWAIPTATDIAFTLGIVSLLG), 153–173 (ILLTAIAIFDDIAAIVIIALF), 179–199 (SLLSLSLALVFTLILIGLNYF), 204–224 (ISVFMLFGVALWIAVLKSGVH), 256–276 (VVFLILPLFAFANAGVSFVGL), 285–305 (VVLGIGLGLFLGKQLGIFLSL), 325–345 (VYGIALICGVGFTMSLFIGSL), and 357–377 (MVKIGVVFGSFIAGLTGFLVL).

This sequence belongs to the NhaA Na(+)/H(+) (TC 2.A.33) antiporter family.

It is found in the cell inner membrane. The catalysed reaction is Na(+)(in) + 2 H(+)(out) = Na(+)(out) + 2 H(+)(in). In terms of biological role, na(+)/H(+) antiporter that extrudes sodium in exchange for external protons. In Legionella pneumophila (strain Lens), this protein is Na(+)/H(+) antiporter NhaA.